The primary structure comprises 277 residues: Large ribosomal subunit protein uL2 (277 aa).

The interval 219–277 (TVRGSVMNPNDHPHGGGEGKAPVGRKAPSTPWGKPALGLKTRNKKAKSDKLIVRRRNEK) is disordered. Basic and acidic residues predominate over residues 264 to 277 (AKSDKLIVRRRNEK).

The protein belongs to the universal ribosomal protein uL2 family. As to quaternary structure, part of the 50S ribosomal subunit. Forms a bridge to the 30S subunit in the 70S ribosome.

Functionally, one of the primary rRNA binding proteins. Required for association of the 30S and 50S subunits to form the 70S ribosome, for tRNA binding and peptide bond formation. It has been suggested to have peptidyltransferase activity; this is somewhat controversial. Makes several contacts with the 16S rRNA in the 70S ribosome. The chain is Large ribosomal subunit protein uL2 from Streptococcus pneumoniae serotype 2 (strain D39 / NCTC 7466).